A 339-amino-acid polypeptide reads, in one-letter code: uncharacterized protein (339 aa).

VOC domains follow at residues 2-127 (EFDY…VRSE) and 141-276 (TIDH…CLEI). The Fe cation site is built by H144, H222, and E306.

Belongs to the 4HPPD family. It depends on Fe cation as a cofactor.

This is an uncharacterized protein from Synechocystis sp. (strain ATCC 27184 / PCC 6803 / Kazusa).